Here is a 193-residue protein sequence, read N- to C-terminus: Ion-translocating oxidoreductase complex subunit A (193 aa).

The next 6 membrane-spanning stretches (helical) occupy residues 5-25 (LLLL…FLGL), 39-59 (VGMG…SYLM), 63-83 (ILIP…VIAV), 102-122 (LLGI…VALL), 134-154 (IIYG…FAAM), and 171-191 (SIAM…TGLI).

This sequence belongs to the NqrDE/RnfAE family. In terms of assembly, the complex is composed of six subunits: RnfA, RnfB, RnfC, RnfD, RnfE and RnfG.

It localises to the cell inner membrane. Part of a membrane-bound complex that couples electron transfer with translocation of ions across the membrane. This Aeromonas salmonicida (strain A449) protein is Ion-translocating oxidoreductase complex subunit A.